We begin with the raw amino-acid sequence, 854 residues long: Leucine--tRNA ligase (854 aa).

A disordered region spans residues 1-32; that stretch reads MARRDMAAETMDPRASTEPSPNEPREPARYDH. The segment covering 23–32 has biased composition (basic and acidic residues); it reads EPREPARYDH. The short motif at 69–80 is the 'HIGH' region element; sequence PYPSGSGLHVGH. Residues 633–637 carry the 'KMSKS' region motif; sequence KMSKS. Lys-636 is an ATP binding site.

Belongs to the class-I aminoacyl-tRNA synthetase family.

The protein localises to the cytoplasm. The catalysed reaction is tRNA(Leu) + L-leucine + ATP = L-leucyl-tRNA(Leu) + AMP + diphosphate. The protein is Leucine--tRNA ligase of Sorangium cellulosum (strain So ce56) (Polyangium cellulosum (strain So ce56)).